Consider the following 107-residue polypeptide: UPF0145 protein PC1_1703 (107 aa).

Belongs to the UPF0145 family.

The polypeptide is UPF0145 protein PC1_1703 (Pectobacterium carotovorum subsp. carotovorum (strain PC1)).